A 209-amino-acid polypeptide reads, in one-letter code: Cerebral peptide 1 (209 aa).

The signal sequence occupies residues 1–20 (MLLAKISVVVLLLAIDGTSS). The segment covering 21–39 (SESTDNVVLSSSPDSQKAA) has biased composition (polar residues). Positions 21 to 43 (SESTDNVVLSSSPDSQKAATSRH) are cleaved as a propeptide — connecting peptide 1. Residues 21–56 (SESTDNVVLSSSPDSQKAATSRHKRAPGWGKRSSLN) form a disordered region. A Tryptophan amide modification is found at Trp49. Residues 53–77 (SSLNDEDLFADSDSAQELLDSVAAL) constitute a propeptide, connecting peptide 2. Trp83 and Trp105 each carry tryptophan amide. The interval 98–169 (EAKRAPGWGK…APGWGKRSGG (72 aa)) is disordered. The propeptide at 109–122 (GQEIDVDEDGSEQE) is connecting peptide 4. Residues Trp128, Trp135, Trp142, Trp149, Trp156, and Trp163 each carry the tryptophan amide modification. A propeptide spans 167-191 (SGGDYCETLEKMVDAYIYKAVEVDS) (connecting peptide 5). Cys172 and Cys197 form a disulfide bridge.

As to quaternary structure, homodimer; disulfide-linked. Cerebral peptide 1 is expressed in the cerebral, pedal and buccal ganglia and B1 and B2 neurons. APGW-amide is expressed in buccal ganglia and several neurons.

The protein resides in the secreted. In terms of biological role, may function as a peptide transmitter. The chain is Cerebral peptide 1 from Aplysia californica (California sea hare).